A 455-amino-acid chain; its full sequence is tRNA modification GTPase MnmE (455 aa).

Arg-26, Glu-86, and Arg-125 together coordinate (6S)-5-formyl-5,6,7,8-tetrahydrofolate. One can recognise a TrmE-type G domain in the interval 222–376 (GLKTAIIGRP…VEEKINQIFF (155 aa)). Asn-232 serves as a coordination point for K(+). Residues 232–237 (NVGKSS), 251–257 (TDIAGTT), and 276–279 (DTAG) contribute to the GTP site. Ser-236 is a Mg(2+) binding site. K(+)-binding residues include Thr-251, Ile-253, and Thr-256. Residue Thr-257 coordinates Mg(2+). Lys-455 is a (6S)-5-formyl-5,6,7,8-tetrahydrofolate binding site.

This sequence belongs to the TRAFAC class TrmE-Era-EngA-EngB-Septin-like GTPase superfamily. TrmE GTPase family. In terms of assembly, homodimer. Heterotetramer of two MnmE and two MnmG subunits. It depends on K(+) as a cofactor.

It localises to the cytoplasm. Functionally, exhibits a very high intrinsic GTPase hydrolysis rate. Involved in the addition of a carboxymethylaminomethyl (cmnm) group at the wobble position (U34) of certain tRNAs, forming tRNA-cmnm(5)s(2)U34. This chain is tRNA modification GTPase MnmE, found in Lactococcus lactis subsp. lactis (strain IL1403) (Streptococcus lactis).